We begin with the raw amino-acid sequence, 370 residues long: Chaperone protein DnaJ (370 aa).

The J domain maps to 7-73 (DYYEILGVPR…QKRAMYDRFG (67 aa)). Residues 144-226 (GTEIPIEYER…CGGSGRVLRR (83 aa)) form a CR-type zinc finger. C157, C160, C174, C177, C200, C203, C214, and C217 together coordinate Zn(2+). 4 CXXCXGXG motif repeats span residues 157 to 164 (CPRCGGTG), 174 to 181 (CPRCGGTG), 200 to 207 (CDECGGTG), and 214 to 221 (CHECGGSG).

This sequence belongs to the DnaJ family. Homodimer. It depends on Zn(2+) as a cofactor.

It localises to the cytoplasm. Participates actively in the response to hyperosmotic and heat shock by preventing the aggregation of stress-denatured proteins and by disaggregating proteins, also in an autonomous, DnaK-independent fashion. Unfolded proteins bind initially to DnaJ; upon interaction with the DnaJ-bound protein, DnaK hydrolyzes its bound ATP, resulting in the formation of a stable complex. GrpE releases ADP from DnaK; ATP binding to DnaK triggers the release of the substrate protein, thus completing the reaction cycle. Several rounds of ATP-dependent interactions between DnaJ, DnaK and GrpE are required for fully efficient folding. Also involved, together with DnaK and GrpE, in the DNA replication of plasmids through activation of initiation proteins. This chain is Chaperone protein DnaJ, found in Thermotoga neapolitana (strain ATCC 49049 / DSM 4359 / NBRC 107923 / NS-E).